A 586-amino-acid polypeptide reads, in one-letter code: Arginine--tRNA ligase (586 aa).

Positions 133–143 (ANPTGPLNIVS) match the 'HIGH' region motif.

This sequence belongs to the class-I aminoacyl-tRNA synthetase family. In terms of assembly, monomer.

Its subcellular location is the cytoplasm. The catalysed reaction is tRNA(Arg) + L-arginine + ATP = L-arginyl-tRNA(Arg) + AMP + diphosphate. This Leptospira interrogans serogroup Icterohaemorrhagiae serovar Lai (strain 56601) protein is Arginine--tRNA ligase.